A 618-amino-acid chain; its full sequence is ELMO domain-containing protein C (618 aa).

Residues 1–72 are a coiled coil; it reads MERYRIRRER…EELRLQGDRF (72 aa). 2 disordered regions span residues 153-175 and 245-276; these read NFDN…KPSL and TTTT…STTV. 2 stretches are compositionally biased toward low complexity: residues 156–171 and 245–275; these read NNNN…NNGN and TTTT…SSTT. In terms of domain architecture, ELMO spans 382-545; the sequence is DHEEYLKHLW…KLKSQLNEIS (164 aa). 2 stretches are compositionally biased toward low complexity: residues 574–592 and 602–618; these read QQQQ…PSSP and TTTS…TQNN. Residues 574–618 form a disordered region; sequence QQQQQLQQQQQSLPLPSSPRSFLNNYQQTTTSSTSISPSKNTQNN.

In Dictyostelium discoideum (Social amoeba), this protein is ELMO domain-containing protein C (elmoC).